Reading from the N-terminus, the 208-residue chain is Protein GrpE (208 aa).

Residues Met-1–Glu-62 are disordered. Residues Ser-46 to Ala-55 are compositionally biased toward acidic residues.

This sequence belongs to the GrpE family. In terms of assembly, homodimer.

It localises to the cytoplasm. In terms of biological role, participates actively in the response to hyperosmotic and heat shock by preventing the aggregation of stress-denatured proteins, in association with DnaK and GrpE. It is the nucleotide exchange factor for DnaK and may function as a thermosensor. Unfolded proteins bind initially to DnaJ; upon interaction with the DnaJ-bound protein, DnaK hydrolyzes its bound ATP, resulting in the formation of a stable complex. GrpE releases ADP from DnaK; ATP binding to DnaK triggers the release of the substrate protein, thus completing the reaction cycle. Several rounds of ATP-dependent interactions between DnaJ, DnaK and GrpE are required for fully efficient folding. The polypeptide is Protein GrpE (Staphylococcus haemolyticus (strain JCSC1435)).